The following is a 653-amino-acid chain: Serine/threonine-protein phosphatase with EF-hands 1 (653 aa).

Residues 16 to 45 (SLRAALIIQNWYRGYKARLKARQHYALTIF) form the IQ domain. Residues 121 to 455 (IDLLLEAFKE…PRFFQYQVTK (335 aa)) are catalytic. Positions 172, 174, 201, and 233 each coordinate Mn(2+). The Proton donor role is filled by H234. Mn(2+) is bound by residues H285 and H403. 3 consecutive EF-hand domains span residues 483-518 (SRKS…ILGL), 566-601 (RYRS…FSSH), and 606-641 (IDDS…VHRY). Residues D579, D581, S583, E590, D619, N621, D623, S625, and E630 each coordinate Ca(2+).

The protein belongs to the PPP phosphatase family. It depends on Mn(2+) as a cofactor. The cofactor is Mg(2+). As to expression, detected in retina and retinal derived Y-79 retinoblastoma cells. Also found in fetal brain.

It carries out the reaction O-phospho-L-seryl-[protein] + H2O = L-seryl-[protein] + phosphate. It catalyses the reaction O-phospho-L-threonyl-[protein] + H2O = L-threonyl-[protein] + phosphate. Its activity is regulated as follows. Activated by calcium. In terms of biological role, may have a role in the recovery or adaptation response of photoreceptors. May have a role in development. This chain is Serine/threonine-protein phosphatase with EF-hands 1 (PPEF1), found in Homo sapiens (Human).